The following is a 426-amino-acid chain: Putative competence-damage inducible protein (426 aa).

This sequence belongs to the CinA family.

The chain is Putative competence-damage inducible protein from Symbiobacterium thermophilum (strain DSM 24528 / JCM 14929 / IAM 14863 / T).